The sequence spans 141 residues: Nucleoside diphosphate kinase (141 aa).

Positions 11, 59, 87, 93, 104, and 114 each coordinate ATP. Residue His-117 is the Pros-phosphohistidine intermediate of the active site.

The protein belongs to the NDK family. As to quaternary structure, homotetramer. It depends on Mg(2+) as a cofactor.

The protein resides in the cytoplasm. The enzyme catalyses a 2'-deoxyribonucleoside 5'-diphosphate + ATP = a 2'-deoxyribonucleoside 5'-triphosphate + ADP. The catalysed reaction is a ribonucleoside 5'-diphosphate + ATP = a ribonucleoside 5'-triphosphate + ADP. Major role in the synthesis of nucleoside triphosphates other than ATP. The ATP gamma phosphate is transferred to the NDP beta phosphate via a ping-pong mechanism, using a phosphorylated active-site intermediate. The sequence is that of Nucleoside diphosphate kinase from Photorhabdus laumondii subsp. laumondii (strain DSM 15139 / CIP 105565 / TT01) (Photorhabdus luminescens subsp. laumondii).